The sequence spans 476 residues: Glycogen synthase (476 aa).

Lysine 15 contributes to the ADP-alpha-D-glucose binding site.

Belongs to the glycosyltransferase 1 family. Bacterial/plant glycogen synthase subfamily.

It carries out the reaction [(1-&gt;4)-alpha-D-glucosyl](n) + ADP-alpha-D-glucose = [(1-&gt;4)-alpha-D-glucosyl](n+1) + ADP + H(+). The protein operates within glycan biosynthesis; glycogen biosynthesis. Its function is as follows. Synthesizes alpha-1,4-glucan chains using ADP-glucose. The sequence is that of Glycogen synthase from Actinobacillus succinogenes (strain ATCC 55618 / DSM 22257 / CCUG 43843 / 130Z).